We begin with the raw amino-acid sequence, 352 residues long: S-adenosylmethionine:tRNA ribosyltransferase-isomerase (352 aa).

The protein belongs to the QueA family. Monomer.

It is found in the cytoplasm. It carries out the reaction 7-aminomethyl-7-carbaguanosine(34) in tRNA + S-adenosyl-L-methionine = epoxyqueuosine(34) in tRNA + adenine + L-methionine + 2 H(+). It participates in tRNA modification; tRNA-queuosine biosynthesis. Transfers and isomerizes the ribose moiety from AdoMet to the 7-aminomethyl group of 7-deazaguanine (preQ1-tRNA) to give epoxyqueuosine (oQ-tRNA). In Bacteroides fragilis (strain ATCC 25285 / DSM 2151 / CCUG 4856 / JCM 11019 / LMG 10263 / NCTC 9343 / Onslow / VPI 2553 / EN-2), this protein is S-adenosylmethionine:tRNA ribosyltransferase-isomerase.